Here is a 500-residue protein sequence, read N- to C-terminus: Glutelin type-B 4 (500 aa).

A signal peptide spans 1–24; it reads MATIAFSRLSIYFCVLLLCHGSMA. 2 cysteine pairs are disulfide-bonded: C45/C78 and C121/C310. 2 Cupin type-1 domains span residues 50 to 245 and 316 to 465; these read LQAF…LVAK and LNIE…EQAR. Positions 481-493 are enriched in polar residues; sequence RYQQQTYPGFSNE. The interval 481-500 is disordered; it reads RYQQQTYPGFSNESENEALE.

The protein belongs to the 11S seed storage protein (globulins) family. In terms of assembly, hexamer; each subunit is composed of an acidic and a basic chain derived from a single precursor and linked by a disulfide bond. Expressed in endosperm (at protein level).

Seed storage protein. The polypeptide is Glutelin type-B 4 (GLUB4) (Oryza sativa subsp. japonica (Rice)).